Reading from the N-terminus, the 208-residue chain is 2-phospho-L-lactate guanylyltransferase (208 aa).

The protein belongs to the CofC family. Homodimer.

It carries out the reaction (2S)-2-phospholactate + GTP + H(+) = (2S)-lactyl-2-diphospho-5'-guanosine + diphosphate. The protein operates within cofactor biosynthesis; coenzyme F420 biosynthesis. In terms of biological role, guanylyltransferase that catalyzes the activation of (2S)-2-phospholactate (2-PL) as (2S)-lactyl-2-diphospho-5'-guanosine, via the condensation of 2-PL with GTP. It is involved in the biosynthesis of coenzyme F420, a hydride carrier cofactor. The protein is 2-phospho-L-lactate guanylyltransferase of Methanosarcina barkeri (strain Fusaro / DSM 804).